A 91-amino-acid polypeptide reads, in one-letter code: Cell division protein FtsB (91 aa).

Residues 1 to 3 are Cytoplasmic-facing; that stretch reads MRW. The helical transmembrane segment at 4–21 threads the bilayer; sequence PLIVLAVLVIVLQYPLWL. The Periplasmic portion of the chain corresponds to 22–91; it reads GKGGWLRVWD…EIFVHTPRKP (70 aa). Positions 28 to 74 form a coiled coil; sequence RVWDVDRQLQAQRETNQRLEQRNAGLEAEVRDLKSGNEAVEERARFE.

It belongs to the FtsB family. In terms of assembly, part of a complex composed of FtsB, FtsL and FtsQ.

Its subcellular location is the cell inner membrane. Its function is as follows. Essential cell division protein. May link together the upstream cell division proteins, which are predominantly cytoplasmic, with the downstream cell division proteins, which are predominantly periplasmic. This is Cell division protein FtsB from Aromatoleum aromaticum (strain DSM 19018 / LMG 30748 / EbN1) (Azoarcus sp. (strain EbN1)).